A 257-amino-acid polypeptide reads, in one-letter code: Snake venom serine protease KN1 (257 aa).

Positions 1–18 (MVLIRVLANLLILQLSYA) are cleaved as a signal peptide. Positions 19-24 (QKSSEL) are excised as a propeptide. Residues 25-248 (VVGGHPCNIN…HLDWIKSIIA (224 aa)) enclose the Peptidase S1 domain. 5 disulfides stabilise this stretch: Cys-31–Cys-162, Cys-49–Cys-65, Cys-141–Cys-209, Cys-173–Cys-188, and Cys-199–Cys-224. His-64 (charge relay system) is an active-site residue. N-linked (GlcNAc...) asparagine glycosylation occurs at Asn-102. Asp-109 serves as the catalytic Charge relay system. 2 N-linked (GlcNAc...) asparagine glycosylation sites follow: Asn-120 and Asn-121. The Charge relay system role is filled by Ser-203.

The protein belongs to the peptidase S1 family. Snake venom subfamily. Monomer. Expressed by the venom gland.

It is found in the secreted. In terms of biological role, snake venom serine protease that may act in the hemostasis system of the prey. The sequence is that of Snake venom serine protease KN1 from Trimeresurus stejnegeri (Chinese green tree viper).